The following is a 238-amino-acid chain: ATP synthase subunit a (238 aa).

5 helical membrane-spanning segments follow: residues L18 to A38, Y75 to M95, N112 to I132, V179 to F199, and I203 to L223.

This sequence belongs to the ATPase A chain family. As to quaternary structure, F-type ATPases have 2 components, CF(1) - the catalytic core - and CF(0) - the membrane proton channel. CF(1) has five subunits: alpha(3), beta(3), gamma(1), delta(1), epsilon(1). CF(0) has three main subunits: a(1), b(2) and c(9-12). The alpha and beta chains form an alternating ring which encloses part of the gamma chain. CF(1) is attached to CF(0) by a central stalk formed by the gamma and epsilon chains, while a peripheral stalk is formed by the delta and b chains.

It is found in the cell membrane. Its function is as follows. Key component of the proton channel; it plays a direct role in the translocation of protons across the membrane. In Streptococcus agalactiae serotype III (strain NEM316), this protein is ATP synthase subunit a.